The chain runs to 79 residues: MVFSLYKNIYKFVNLLKIWIINLKVIIKIIISEIIVLIGNTIHDNQKIDGITFVKNEFIISSIFYFFFLFKIIYTERKP.

Transmembrane regions (helical) follow at residues 18–38 and 50–70; these read IWIINLKVIIKIIISEIIVLI and GITFVKNEFIISSIFYFFFLF.

The protein resides in the host membrane. This is an uncharacterized protein from Spiroplasma virus SpV1-R8A2 B (SpV1).